The sequence spans 303 residues: Small ribosomal subunit protein uS2 (303 aa).

A disordered region spans residues Ala-258–Glu-303. Over residues Ala-294–Glu-303 the composition is skewed to basic and acidic residues.

It belongs to the universal ribosomal protein uS2 family.

This chain is Small ribosomal subunit protein uS2, found in Bifidobacterium animalis subsp. lactis (strain AD011).